The chain runs to 62 residues: Prokaryotic ubiquitin-like protein Pup (62 aa).

Residues 1–36 (MEKSSQIHGSKPGDDNADEPENAAGQSQIRKQGADD) form a disordered region. The interval 18–56 (DEPENAAGQSQIRKQGADDLLDEIDGLLESNAEEFVRSY) is ARC ATPase binding. Position 62 is a deamidated glutamine (glutamine 62). An Isoglutamyl lysine isopeptide (Gln-Lys) (interchain with K-? in acceptor proteins) cross-link involves residue glutamine 62.

This sequence belongs to the prokaryotic ubiquitin-like protein family. As to quaternary structure, strongly interacts with the proteasome-associated ATPase ARC through a hydrophobic interface; the interacting region of Pup lies in its C-terminal half. There is one Pup binding site per ARC hexamer ring. Post-translationally, is modified by deamidation of its C-terminal glutamine to glutamate by the deamidase Dop, a prerequisite to the subsequent pupylation process.

Its pathway is protein degradation; proteasomal Pup-dependent pathway. Its function is as follows. Protein modifier that is covalently attached to lysine residues of substrate proteins, thereby targeting them for proteasomal degradation. The tagging system is termed pupylation. This chain is Prokaryotic ubiquitin-like protein Pup, found in Corynebacterium kroppenstedtii (strain DSM 44385 / JCM 11950 / CIP 105744 / CCUG 35717).